A 396-amino-acid polypeptide reads, in one-letter code: S-adenosylmethionine synthase (396 aa).

H16 provides a ligand contact to ATP. D18 contributes to the Mg(2+) binding site. A K(+)-binding site is contributed by E44. Residues E57 and Q100 each contribute to the L-methionine site. Positions 100-110 (QSKDIALGVDK) are flexible loop. Residues 176 to 178 (DGK), 243 to 244 (RF), D252, 258 to 259 (RK), A275, and K279 contribute to the ATP site. Position 252 (D252) interacts with L-methionine. K283 lines the L-methionine pocket.

It belongs to the AdoMet synthase family. As to quaternary structure, homotetramer; dimer of dimers. The cofactor is Mg(2+). It depends on K(+) as a cofactor.

Its subcellular location is the cytoplasm. It carries out the reaction L-methionine + ATP + H2O = S-adenosyl-L-methionine + phosphate + diphosphate. Its pathway is amino-acid biosynthesis; S-adenosyl-L-methionine biosynthesis; S-adenosyl-L-methionine from L-methionine: step 1/1. In terms of biological role, catalyzes the formation of S-adenosylmethionine (AdoMet) from methionine and ATP. The overall synthetic reaction is composed of two sequential steps, AdoMet formation and the subsequent tripolyphosphate hydrolysis which occurs prior to release of AdoMet from the enzyme. The sequence is that of S-adenosylmethionine synthase from Lachnoclostridium phytofermentans (strain ATCC 700394 / DSM 18823 / ISDg) (Clostridium phytofermentans).